The following is a 120-amino-acid chain: NAD(P)H-quinone oxidoreductase subunit 3, organellar chromatophore (120 aa).

3 helical membrane passes run 6-26, 64-84, and 89-109; these read GYDAFLGFLLIATAVPVLALL, MFALVFVIFDVETVFLYPWAV, and LGLLAFIEALIFIAILVIALA.

Belongs to the complex I subunit 3 family. As to quaternary structure, NDH is composed of at least 16 different subunits, 5 of which are encoded in the nucleus.

It localises to the plastid. It is found in the organellar chromatophore thylakoid membrane. It catalyses the reaction a plastoquinone + NADH + (n+1) H(+)(in) = a plastoquinol + NAD(+) + n H(+)(out). The enzyme catalyses a plastoquinone + NADPH + (n+1) H(+)(in) = a plastoquinol + NADP(+) + n H(+)(out). In terms of biological role, NDH shuttles electrons from NAD(P)H:plastoquinone, via FMN and iron-sulfur (Fe-S) centers, to quinones in the photosynthetic chain and possibly in a chloroplast respiratory chain. The immediate electron acceptor for the enzyme in this species is believed to be plastoquinone. Couples the redox reaction to proton translocation, and thus conserves the redox energy in a proton gradient. The chain is NAD(P)H-quinone oxidoreductase subunit 3, organellar chromatophore from Paulinella chromatophora.